The primary structure comprises 384 residues: DNA dC-&gt;dU-editing enzyme APOBEC-3G (384 aa).

The tract at residues Met-1–Ser-60 is essential for cytoplasmic localization. 2 CMP/dCMP-type deaminase domains span residues Arg-29 to Leu-138 and Gly-214 to Leu-328. Phosphothreonine; by PKA is present on Thr-32. The Zn(2+) site is built by His-65, Cys-97, and Cys-100. Residues Glu-209–Ser-336 are necessary for homooligomerization. The interaction with DNA stretch occupies residues Arg-213 to Arg-215. Residue Thr-218 is modified to Phosphothreonine; by PKA and CAMK2. Residue His-257 coordinates Zn(2+). Residue Glu-259 is the Proton donor of the active site. Positions 288 and 291 each coordinate Zn(2+). An interaction with DNA region spans residues Arg-313–Arg-320.

This sequence belongs to the cytidine and deoxycytidylate deaminase family. In terms of assembly, homodimer. Homooligomer. Can bind RNA to form ribonucleoprotein complexes of high-molecular-mass (HMM) or low-molecular-mass (LMM). HMM is inactive and heterogeneous in protein composition because of binding nonselectively to cellular RNAs, which in turn are associated with variety of cellular proteins. The LMM form which is enzymatically active has few or no RNAs associated. Its ability to form homooligomer is distinct from its ability to assemble into HMM. Interacts with APOBEC3B, APOBEC3F, MOV10, AGO2, EIF4E, EIF4ENIF1, DCP2 and DDX6 in an RNA-dependent manner. Interacts with AGO1, AGO3 and PKA/PRKACA. Requires Zn(2+) as cofactor.

Its subcellular location is the cytoplasm. It is found in the nucleus. The protein localises to the P-body. It carries out the reaction a 2'-deoxycytidine in single-stranded DNA + H2O + H(+) = a 2'-deoxyuridine in single-stranded DNA + NH4(+). In terms of biological role, DNA deaminase (cytidine deaminase) which acts as an inhibitor of retrovirus replication and retrotransposon mobility. After the penetration of retroviral nucleocapsids into target cells of infection and the initiation of reverse transcription, it can induce the conversion of cytosine to uracil in the minus-sense single-strand viral DNA, leading to G-to-A hypermutations in the subsequent plus-strand viral DNA. The resultant detrimental levels of mutations in the proviral genome, along with a deamination-independent mechanism that works prior to the proviral integration, together exert efficient antiretroviral effects in infected target cells. Selectively targets single-stranded DNA and does not deaminate double-stranded DNA or single- or double-stranded RNA. This Gorilla gorilla gorilla (Western lowland gorilla) protein is DNA dC-&gt;dU-editing enzyme APOBEC-3G (APOBEC3G).